A 584-amino-acid chain; its full sequence is Arginine--tRNA ligase (584 aa).

The 'HIGH' region motif lies at 126–136; sequence PNIAKEMHVGH.

Belongs to the class-I aminoacyl-tRNA synthetase family. Monomer.

Its subcellular location is the cytoplasm. It carries out the reaction tRNA(Arg) + L-arginine + ATP = L-arginyl-tRNA(Arg) + AMP + diphosphate. The polypeptide is Arginine--tRNA ligase (Synechococcus sp. (strain ATCC 27144 / PCC 6301 / SAUG 1402/1) (Anacystis nidulans)).